Consider the following 428-residue polypeptide: Chaperone SurA (428 aa).

The first 20 residues, 1–20, serve as a signal peptide directing secretion; the sequence is MKNWKTLLLGIAMIANTSFA. 2 consecutive PpiC domains span residues 171-272 and 282-382; these read STEL…KVND and VTEV…ELLD.

It is found in the periplasm. The catalysed reaction is [protein]-peptidylproline (omega=180) = [protein]-peptidylproline (omega=0). In terms of biological role, chaperone involved in the correct folding and assembly of outer membrane proteins. Recognizes specific patterns of aromatic residues and the orientation of their side chains, which are found more frequently in integral outer membrane proteins. May act in both early periplasmic and late outer membrane-associated steps of protein maturation. This is Chaperone SurA from Shigella dysenteriae serotype 1 (strain Sd197).